A 341-amino-acid polypeptide reads, in one-letter code: Phosphate acyltransferase (341 aa).

Belongs to the PlsX family. As to quaternary structure, homodimer. Probably interacts with PlsY.

It localises to the cytoplasm. It catalyses the reaction a fatty acyl-[ACP] + phosphate = an acyl phosphate + holo-[ACP]. The protein operates within lipid metabolism; phospholipid metabolism. Its function is as follows. Catalyzes the reversible formation of acyl-phosphate (acyl-PO(4)) from acyl-[acyl-carrier-protein] (acyl-ACP). This enzyme utilizes acyl-ACP as fatty acyl donor, but not acyl-CoA. The polypeptide is Phosphate acyltransferase (Vibrio campbellii (strain ATCC BAA-1116)).